A 165-amino-acid chain; its full sequence is Cyclic pyranopterin monophosphate synthase (165 aa).

Substrate-binding positions include 75–77 and 115–116; these read MCH and ME. Asp-130 is an active-site residue.

This sequence belongs to the MoaC family. Homohexamer; trimer of dimers.

It carries out the reaction (8S)-3',8-cyclo-7,8-dihydroguanosine 5'-triphosphate = cyclic pyranopterin phosphate + diphosphate. It functions in the pathway cofactor biosynthesis; molybdopterin biosynthesis. Catalyzes the conversion of (8S)-3',8-cyclo-7,8-dihydroguanosine 5'-triphosphate to cyclic pyranopterin monophosphate (cPMP). The protein is Cyclic pyranopterin monophosphate synthase of Halalkalibacterium halodurans (strain ATCC BAA-125 / DSM 18197 / FERM 7344 / JCM 9153 / C-125) (Bacillus halodurans).